The primary structure comprises 278 residues: Large ribosomal subunit protein uL2 (278 aa).

Residues 224–278 form a disordered region; that stretch reads VAMNPVDHPHGGGEGRTSGGRNPVTPWGVPTKGKKTRSNKRTDTFILSSRHNRKK.

It belongs to the universal ribosomal protein uL2 family. As to quaternary structure, part of the 50S ribosomal subunit. Forms a bridge to the 30S subunit in the 70S ribosome.

One of the primary rRNA binding proteins. Required for association of the 30S and 50S subunits to form the 70S ribosome, for tRNA binding and peptide bond formation. It has been suggested to have peptidyltransferase activity; this is somewhat controversial. Makes several contacts with the 16S rRNA in the 70S ribosome. The sequence is that of Large ribosomal subunit protein uL2 from Methylorubrum extorquens (strain CM4 / NCIMB 13688) (Methylobacterium extorquens).